Here is a 380-residue protein sequence, read N- to C-terminus: Beta sliding clamp (380 aa).

Belongs to the beta sliding clamp family. Forms a ring-shaped head-to-tail homodimer around DNA which binds and tethers DNA polymerases and other proteins to the DNA. The DNA replisome complex has a single clamp-loading complex (3 tau and 1 each of delta, delta', psi and chi subunits) which binds 3 Pol III cores (1 core on the leading strand and 2 on the lagging strand) each with a beta sliding clamp dimer. Additional proteins in the replisome are other copies of gamma, psi and chi, Ssb, DNA helicase and RNA primase.

The protein localises to the cytoplasm. Confers DNA tethering and processivity to DNA polymerases and other proteins. Acts as a clamp, forming a ring around DNA (a reaction catalyzed by the clamp-loading complex) which diffuses in an ATP-independent manner freely and bidirectionally along dsDNA. Initially characterized for its ability to contact the catalytic subunit of DNA polymerase III (Pol III), a complex, multichain enzyme responsible for most of the replicative synthesis in bacteria; Pol III exhibits 3'-5' exonuclease proofreading activity. The beta chain is required for initiation of replication as well as for processivity of DNA replication. The polypeptide is Beta sliding clamp (dnaN) (Halalkalibacterium halodurans (strain ATCC BAA-125 / DSM 18197 / FERM 7344 / JCM 9153 / C-125) (Bacillus halodurans)).